A 101-amino-acid chain; its full sequence is Fructose-bisphosphate aldolase (101 aa).

Lysine 11 functions as the Schiff-base intermediate with dihydroxyacetone-P in the catalytic mechanism.

It belongs to the class I fructose-bisphosphate aldolase family.

The enzyme catalyses beta-D-fructose 1,6-bisphosphate = D-glyceraldehyde 3-phosphate + dihydroxyacetone phosphate. Its pathway is carbohydrate degradation; glycolysis; D-glyceraldehyde 3-phosphate and glycerone phosphate from D-glucose: step 4/4. In Lymnaea stagnalis (Great pond snail), this protein is Fructose-bisphosphate aldolase.